The chain runs to 205 residues: MNDNREQLTQQIIDAGRFLYGRGWSPATSSNYSARLDEQRALLTVSGKHKGQLGFDDVLATDLAGNSLEPGKKPSAETLLHTQLYAWNPAIGAVLHTHSVNATVLSRLVRGDRLVLQDYELQKAFAGVTTHEGQVEVPIFDNDQDIARLASRVQPWLEAYPHCPGYLIRGHGLYTWGARMSDALRQVEAFEFLFECELKVLSLSR.

Zn(2+) contacts are provided by His96 and His98.

Belongs to the aldolase class II family. MtnB subfamily. It depends on Zn(2+) as a cofactor.

The enzyme catalyses 5-(methylsulfanyl)-D-ribulose 1-phosphate = 5-methylsulfanyl-2,3-dioxopentyl phosphate + H2O. It functions in the pathway amino-acid biosynthesis; L-methionine biosynthesis via salvage pathway; L-methionine from S-methyl-5-thio-alpha-D-ribose 1-phosphate: step 2/6. Its function is as follows. Catalyzes the dehydration of methylthioribulose-1-phosphate (MTRu-1-P) into 2,3-diketo-5-methylthiopentyl-1-phosphate (DK-MTP-1-P). The polypeptide is Methylthioribulose-1-phosphate dehydratase (Pseudomonas aeruginosa (strain LESB58)).